The following is a 40-amino-acid chain: Sapecin-C (40 aa).

Cystine bridges form between Cys-3/Cys-30, Cys-16/Cys-36, and Cys-20/Cys-38.

The protein belongs to the invertebrate defensin family. Type 1 subfamily. As to expression, hemocytes and fat body.

The protein localises to the secreted. In terms of biological role, sapecins, which are potent bactericidal proteins, are produced in response to injury. Sapecin C is cytotoxic to Gram-positive bacteria. The chain is Sapecin-C from Sarcophaga peregrina (Flesh fly).